The sequence spans 248 residues: ATP synthase subunit a, chloroplastic (248 aa).

The next 4 helical transmembrane spans lie at Leu34–Leu54, Val95–Ile115, Ile134–Ser154, and Val203–Ala223.

This sequence belongs to the ATPase A chain family. In terms of assembly, F-type ATPases have 2 components, CF(1) - the catalytic core - and CF(0) - the membrane proton channel. CF(1) has five subunits: alpha(3), beta(3), gamma(1), delta(1), epsilon(1). CF(0) has four main subunits: a, b, b' and c.

It is found in the plastid. It localises to the chloroplast thylakoid membrane. Its function is as follows. Key component of the proton channel; it plays a direct role in the translocation of protons across the membrane. In Guillardia theta (Cryptophyte), this protein is ATP synthase subunit a, chloroplastic.